The following is a 398-amino-acid chain: 1-deoxy-D-xylulose 5-phosphate reductoisomerase (398 aa).

The NADPH site is built by threonine 10, glycine 11, serine 12, isoleucine 13, glycine 36, arginine 37, asparagine 38, and asparagine 124. Lysine 125 provides a ligand contact to 1-deoxy-D-xylulose 5-phosphate. NADPH is bound at residue glutamate 126. Aspartate 150 lines the Mn(2+) pocket. 1-deoxy-D-xylulose 5-phosphate-binding residues include serine 151, glutamate 152, serine 186, and histidine 209. Glutamate 152 contacts Mn(2+). An NADPH-binding site is contributed by glycine 215. 1-deoxy-D-xylulose 5-phosphate-binding residues include serine 222, asparagine 227, lysine 228, and glutamate 231. Glutamate 231 is a Mn(2+) binding site.

It belongs to the DXR family. In terms of assembly, homodimer. The cofactor is Mg(2+). Mn(2+) is required as a cofactor.

It carries out the reaction 2-C-methyl-D-erythritol 4-phosphate + NADP(+) = 1-deoxy-D-xylulose 5-phosphate + NADPH + H(+). The protein operates within isoprenoid biosynthesis; isopentenyl diphosphate biosynthesis via DXP pathway; isopentenyl diphosphate from 1-deoxy-D-xylulose 5-phosphate: step 1/6. Catalyzes the NADPH-dependent rearrangement and reduction of 1-deoxy-D-xylulose-5-phosphate (DXP) to 2-C-methyl-D-erythritol 4-phosphate (MEP). In Yersinia enterocolitica serotype O:8 / biotype 1B (strain NCTC 13174 / 8081), this protein is 1-deoxy-D-xylulose 5-phosphate reductoisomerase.